The following is a 69-amino-acid chain: Toxin Lc b (69 aa).

4 disulfides stabilise this stretch: Cys3-Cys20, Cys13-Cys41, Cys45-Cys56, and Cys57-Cys62.

Belongs to the three-finger toxin family. Long-chain subfamily. Type II alpha-neurotoxin sub-subfamily. In terms of tissue distribution, expressed by the venom gland.

It is found in the secreted. In terms of biological role, binds with high affinity to muscular nicotinic acetylcholine receptors (nAChRs), whereas it binds with a low affinity to neuronal alpha-7/CHRNA7 nAChRs. The polypeptide is Toxin Lc b (Laticauda colubrina (Yellow-lipped sea krait)).